Reading from the N-terminus, the 809-residue chain is Probable replication endonuclease from prophage-like region (809 aa).

Active-site O-(5'-phospho-DNA)-tyrosine intermediate residues include Tyr503 and Tyr507.

Belongs to the phage GPA family.

Possible endonuclease which induces a single-strand cut and initiates DNA replication. This is Probable replication endonuclease from prophage-like region from Salmonella typhimurium (strain LT2 / SGSC1412 / ATCC 700720).